The following is a 504-amino-acid chain: L-carnitine/gamma-butyrobetaine antiporter (504 aa).

A run of 12 helical transmembrane segments spans residues 10 to 30, 51 to 71, 92 to 112, 143 to 163, 195 to 215, 231 to 251, 263 to 283, 316 to 336, 347 to 367, 403 to 423, 446 to 466, and 475 to 495; these read IEPKVFFPPLIIVGILCWLTV, WGWAFEWYMVVMLFGWFWLVF, IFMMFASCTSAAVLFWGSIEI, GPLPWATYSFLSVAFAYFFFV, FYLVALIFAMGTSLGLATPLV, LDAIIITCWIILNAICVACGL, SYLSFLMLGWVFIVSGASFIM, WTVFYWAWWVIYAIQMSIFLA, LCFGMVMGLTASTWILWTVLG, LSTATMWGFFILCFIATVTLI, LLVRIGWSILVGIIGIVLLAL, and AIIAGGCPLFFVNIMVTLSFI.

This sequence belongs to the BCCT transporter (TC 2.A.15) family. CaiT subfamily. In terms of assembly, homotrimer.

It is found in the cell inner membrane. The enzyme catalyses 4-(trimethylamino)butanoate(in) + (R)-carnitine(out) = 4-(trimethylamino)butanoate(out) + (R)-carnitine(in). It functions in the pathway amine and polyamine metabolism; carnitine metabolism. Functionally, catalyzes the exchange of L-carnitine for gamma-butyrobetaine. The sequence is that of L-carnitine/gamma-butyrobetaine antiporter from Escherichia fergusonii (strain ATCC 35469 / DSM 13698 / CCUG 18766 / IAM 14443 / JCM 21226 / LMG 7866 / NBRC 102419 / NCTC 12128 / CDC 0568-73).